A 117-amino-acid polypeptide reads, in one-letter code: Protein MGF 110-13L (117 aa).

The N-terminal stretch at M1–P16 is a signal peptide.

Belongs to the asfivirus MGF 110 family.

The chain is Protein MGF 110-13L from Ornithodoros (relapsing fever ticks).